Consider the following 336-residue polypeptide: MAFNMHNRNLLSLMHHSTRELRYLLDLSRDLKRAKYTGTEQQHLKRKNIALIFEKTSTRTRCAFEVAAYDQGANVTYIDPNSSQIGHKESMKDTARVLGRMYDAIEYRGFKQEIVEELAKFAGVPVFNGLTDEYHPTQMLADVLTMREHSDKPLHDISYAYLGDARNNMGNSLLLIGAKLGMDVRIAAPKALWPHDEFVAQCKKFAEESGAKLTLTEDPKEAVKGVDFVHTDVWVSMGEPVEAWGERIKELLPYQVNMEIMKATGNPRAKFMHCLPAFHNSETKVGKQIAEQYPNLANGIEVTEDVFESPYNIAFEQAENRMHTIKAILVSTLADI.

Carbamoyl phosphate contacts are provided by residues 57-60 (STRT), glutamine 84, arginine 108, and 135-138 (HPTQ). Residues asparagine 168, aspartate 232, and 236–237 (SM) contribute to the L-ornithine site. Residues 274–275 (CL) and arginine 321 contribute to the carbamoyl phosphate site.

This sequence belongs to the aspartate/ornithine carbamoyltransferase superfamily. OTCase family. In terms of assembly, nonameric or dodecamer (tetramer of trimers).

It localises to the cytoplasm. The catalysed reaction is carbamoyl phosphate + L-ornithine = L-citrulline + phosphate + H(+). Its pathway is amino-acid degradation; L-arginine degradation via ADI pathway; carbamoyl phosphate from L-arginine: step 2/2. Its activity is regulated as follows. Inhibited by 2-aminopentanoic acid (norvaline). Activated by phosphate and nucleoside monophosphates such as AMP, GMP, CMP, UMP. Allosterically inhibited by the polyamines such as spermidine and putrescine. Functionally, involved in the catabolism of arginine. Catalyzes the phosphorolysis of citrulline, the reverse reaction of the biosynthetic one, yielding ornithine and carbamoyl phosphate which serve to generate ATP from ADP. This catabolic OTCase does not carry out the biosynthetic reaction because of a poor affinity and a marked cooperativity for carbamoyl phosphate. This is Ornithine carbamoyltransferase, catabolic from Pseudomonas aeruginosa (strain ATCC 15692 / DSM 22644 / CIP 104116 / JCM 14847 / LMG 12228 / 1C / PRS 101 / PAO1).